We begin with the raw amino-acid sequence, 635 residues long: DNA-directed RNA polymerase III subunit rpc3 (635 aa).

Disordered regions lie at residues 131–164 (PEQS…SDQQ), 246–295 (VPRG…GYDT), and 386–424 (SGSI…LSSG). Residues 272–292 (SVDEDDEQDEEENEWSDDEMG) are compositionally biased toward acidic residues. The segment covering 398 to 407 (DNRRGKRPLE) has biased composition (basic and acidic residues). The segment covering 411–424 (NGTNHEGANGLSSG) has biased composition (polar residues). Residues 562–583 (TYKAMSRCFQRLRFERNRLKEF) form a leucine-zipper region.

It belongs to the RNA polymerase beta chain family. As to quaternary structure, component of the RNA polymerase III (Pol III) complex consisting of 17 subunits.

Its subcellular location is the nucleus. DNA-dependent RNA polymerase catalyzes the transcription of DNA into RNA using the four ribonucleoside triphosphates as substrates. Specific core component of RNA polymerase III which synthesizes small RNAs, such as 5S rRNA and tRNAs. The chain is DNA-directed RNA polymerase III subunit rpc3 (rpc82) from Aspergillus clavatus (strain ATCC 1007 / CBS 513.65 / DSM 816 / NCTC 3887 / NRRL 1 / QM 1276 / 107).